The primary structure comprises 434 residues: GTPase Obg (434 aa).

The Obg domain maps to 1–158 (MFLDTAKIKV…RELQLELKIL (158 aa)). One can recognise an OBG-type G domain in the interval 159–336 (ADVGLVGFPS…LLDATAELLD (178 aa)). GTP contacts are provided by residues 165 to 172 (GFPSVGKS), 190 to 194 (FTTIV), 212 to 215 (DLPG), 282 to 285 (NKMD), and 317 to 319 (SGL). Residues serine 172 and threonine 192 each contribute to the Mg(2+) site. The 79-residue stretch at 356–434 (GFDEEEKAFE…IGKFEFEFVD (79 aa)) folds into the OCT domain.

The protein belongs to the TRAFAC class OBG-HflX-like GTPase superfamily. OBG GTPase family. Monomer. The cofactor is Mg(2+).

It localises to the cytoplasm. Its function is as follows. An essential GTPase which binds GTP, GDP and possibly (p)ppGpp with moderate affinity, with high nucleotide exchange rates and a fairly low GTP hydrolysis rate. Plays a role in control of the cell cycle, stress response, ribosome biogenesis and in those bacteria that undergo differentiation, in morphogenesis control. The polypeptide is GTPase Obg (Streptococcus pneumoniae serotype 19F (strain G54)).